The primary structure comprises 219 residues: MLTTTASSAAAVARQLTTRRVIAPSFVSQAIRTYATPAGPPPKGFRIPTPKTWDQEEEHVLDKNGRYFLLTEMFRGMYVAMEQFFRPPYTIYYPFEKGPISPRFRGEHALRRYPSGEERCIACKLCEAVCPAQAITIEAEERADGSRRTTRYDIDMTKCIYCGFCQESCPVDAIVESPNAEYATETREELLYNKEKLLSNGDKWEPELAAAIRADSPYR.

4Fe-4S ferredoxin-type domains follow at residues 111 to 140 (RRYPSGEERCIACKLCEAVCPAQAITIEAE) and 150 to 179 (TRYDIDMTKCIYCGFCQESCPVDAIVESPN). Residues Cys120, Cys123, Cys126, Cys130, Cys159, Cys162, Cys165, and Cys169 each coordinate [4Fe-4S] cluster.

This sequence belongs to the complex I 23 kDa subunit family. Complex I is composed of about 40 different subunits. It depends on [4Fe-4S] cluster as a cofactor.

It is found in the mitochondrion. It catalyses the reaction a ubiquinone + NADH + 5 H(+)(in) = a ubiquinol + NAD(+) + 4 H(+)(out). Functionally, core subunit of the mitochondrial membrane respiratory chain NADH dehydrogenase (Complex I) that is believed to belong to the minimal assembly required for catalysis. Complex I functions in the transfer of electrons from NADH to the respiratory chain. The immediate electron acceptor for the enzyme is believed to be ubiquinone. May donate electrons to ubiquinone. This is NADH-ubiquinone oxidoreductase 23 kDa subunit, mitochondrial (nuo21.3c) from Neurospora crassa (strain ATCC 24698 / 74-OR23-1A / CBS 708.71 / DSM 1257 / FGSC 987).